Reading from the N-terminus, the 151-residue chain is 3-hydroxyacyl-[acyl-carrier-protein] dehydratase FabZ (151 aa).

His57 is an active-site residue.

Belongs to the thioester dehydratase family. FabZ subfamily.

The protein resides in the cytoplasm. It catalyses the reaction a (3R)-hydroxyacyl-[ACP] = a (2E)-enoyl-[ACP] + H2O. Functionally, involved in unsaturated fatty acids biosynthesis. Catalyzes the dehydration of short chain beta-hydroxyacyl-ACPs and long chain saturated and unsaturated beta-hydroxyacyl-ACPs. This is 3-hydroxyacyl-[acyl-carrier-protein] dehydratase FabZ from Synechococcus sp. (strain CC9605).